Here is a 152-residue protein sequence, read N- to C-terminus: UPF0178 protein NIS_0137 (152 aa).

It belongs to the UPF0178 family.

This is UPF0178 protein NIS_0137 from Nitratiruptor sp. (strain SB155-2).